The primary structure comprises 256 residues: Type III pantothenate kinase (256 aa).

An ATP-binding site is contributed by 6–13 (DVGNTNMV). Substrate contacts are provided by residues Y100 and 107-110 (GADR). The Proton acceptor role is filled by D109. D129 lines the K(+) pocket. Position 132 (T132) interacts with ATP. Substrate is bound at residue T184.

The protein belongs to the type III pantothenate kinase family. As to quaternary structure, homodimer. NH4(+) serves as cofactor. K(+) is required as a cofactor.

It localises to the cytoplasm. The enzyme catalyses (R)-pantothenate + ATP = (R)-4'-phosphopantothenate + ADP + H(+). It functions in the pathway cofactor biosynthesis; coenzyme A biosynthesis; CoA from (R)-pantothenate: step 1/5. Catalyzes the phosphorylation of pantothenate (Pan), the first step in CoA biosynthesis. The polypeptide is Type III pantothenate kinase (Clostridioides difficile (strain 630) (Peptoclostridium difficile)).